The following is a 202-amino-acid chain: NAD(P)H-quinone oxidoreductase subunit I (202 aa).

2 4Fe-4S ferredoxin-type domains span residues 55–84 (GRIHYEFDKCIACEVCVRVCPINLPVVDWV) and 95–124 (KNYSIDFGACIFCGNCVEYCPTNCLSMTEE). 8 residues coordinate [4Fe-4S] cluster: C64, C67, C70, C74, C104, C107, C110, and C114. The segment covering 168–187 (EYDPHVVPSDRPRAGQRPEE) has biased composition (basic and acidic residues). The tract at residues 168-202 (EYDPHVVPSDRPRAGQRPEELVDQYKQAAAANEEN) is disordered.

It belongs to the complex I 23 kDa subunit family. In terms of assembly, NDH-1 is composed of at least 11 different subunits. The cofactor is [4Fe-4S] cluster.

The protein localises to the cellular thylakoid membrane. The enzyme catalyses a plastoquinone + NADH + (n+1) H(+)(in) = a plastoquinol + NAD(+) + n H(+)(out). It catalyses the reaction a plastoquinone + NADPH + (n+1) H(+)(in) = a plastoquinol + NADP(+) + n H(+)(out). Functionally, NDH-1 shuttles electrons from an unknown electron donor, via FMN and iron-sulfur (Fe-S) centers, to quinones in the respiratory and/or the photosynthetic chain. The immediate electron acceptor for the enzyme in this species is believed to be plastoquinone. Couples the redox reaction to proton translocation, and thus conserves the redox energy in a proton gradient. The chain is NAD(P)H-quinone oxidoreductase subunit I from Synechococcus elongatus (strain ATCC 33912 / PCC 7942 / FACHB-805) (Anacystis nidulans R2).